A 165-amino-acid polypeptide reads, in one-letter code: Probable cell wall protein PGA15 (165 aa).

Positions 1 to 16 (MKFIIILFTLISIVTA) are cleaved as a signal peptide. Ser-143 carries GPI-anchor amidated serine lipidation. A propeptide spans 144–165 (GAANYLTSFSIGTFFVFVLGLI) (removed in mature form).

It belongs to the IHD1 family. The GPI-anchor is attached to the protein in the endoplasmic reticulum and serves to target the protein to the cell surface. There, the glucosamine-inositol phospholipid moiety is cleaved off and the GPI-modified mannoprotein is covalently attached via its lipidless GPI glycan remnant to the 1,6-beta-glucan of the outer cell wall layer.

It localises to the secreted. The protein localises to the cell wall. Its subcellular location is the membrane. Probable GPI-anchored cell wall protein that may be involved in cell wall organization, hyphal growth, as well as in virulence. This Candida albicans (strain SC5314 / ATCC MYA-2876) (Yeast) protein is Probable cell wall protein PGA15 (PGA15).